Reading from the N-terminus, the 220-residue chain is Uracil-DNA glycosylase (220 aa).

Asp-65 acts as the Proton acceptor in catalysis.

This sequence belongs to the uracil-DNA glycosylase (UDG) superfamily. UNG family.

It localises to the cytoplasm. The enzyme catalyses Hydrolyzes single-stranded DNA or mismatched double-stranded DNA and polynucleotides, releasing free uracil.. Its function is as follows. Excises uracil residues from the DNA which can arise as a result of misincorporation of dUMP residues by DNA polymerase or due to deamination of cytosine. This Amoebophilus asiaticus (strain 5a2) protein is Uracil-DNA glycosylase.